Reading from the N-terminus, the 369-residue chain is Signal recognition particle receptor FtsY (369 aa).

Positions 20–42 (GEENKKEPETRQTDQLESKKEET) are enriched in basic and acidic residues. A disordered region spans residues 20 to 58 (GEENKKEPETRQTDQLESKKEETIQQQQNVQQPQAENKI). Residues 44–53 (QQQQNVQQPQ) show a composition bias toward low complexity. GTP is bound by residues 180 to 187 (GVNGVGKT), 262 to 266 (DTAGR), and 320 to 323 (TKVD).

This sequence belongs to the GTP-binding SRP family. FtsY subfamily. As to quaternary structure, part of the signal recognition particle protein translocation system, which is composed of SRP and FtsY.

The protein localises to the cell membrane. It is found in the cytoplasm. The enzyme catalyses GTP + H2O = GDP + phosphate + H(+). Functionally, involved in targeting and insertion of nascent membrane proteins into the cytoplasmic membrane. Acts as a receptor for the complex formed by the signal recognition particle (SRP) and the ribosome-nascent chain (RNC). This is Signal recognition particle receptor FtsY from Sulfolobus acidocaldarius (strain ATCC 33909 / DSM 639 / JCM 8929 / NBRC 15157 / NCIMB 11770).